The sequence spans 473 residues: Protein TED1 (473 aa).

Over 1–8 (MLRCAVKK) the chain is Cytoplasmic. The chain crosses the membrane as a helical span at residues 9–29 (FAYFATFLTIVANIYIYTYPS). Topologically, residues 30-451 (FHPEQCSWNC…FSLCPFAIQH (422 aa)) are lumenal. Residues N38, N147, N229, N266, and N307 are each glycosylated (N-linked (GlcNAc...) asparagine). Residues 452–472 (VWWFAKVSLLVTIFTWSSLLF) traverse the membrane as a helical segment. Residue V473 is a topological domain, cytoplasmic.

In terms of processing, N-glycosylated.

The protein resides in the endoplasmic reticulum membrane. In terms of biological role, acts together with EMP24 and ERV25 in cargo exit from the endoplasmic reticulum. The protein is Protein TED1 (TED1) of Saccharomyces cerevisiae (strain ATCC 204508 / S288c) (Baker's yeast).